The following is a 129-amino-acid chain: Small ribosomal subunit protein uS13 (129 aa).

Over residues 95 to 114 (NLPVRGQRTKTNARTRRGPR) the composition is skewed to basic residues. The segment at 95 to 129 (NLPVRGQRTKTNARTRRGPRKTVAGRGQKRGATKK) is disordered.

The protein belongs to the universal ribosomal protein uS13 family. In terms of assembly, part of the 30S ribosomal subunit. Forms a loose heterodimer with protein S19. Forms two bridges to the 50S subunit in the 70S ribosome.

In terms of biological role, located at the top of the head of the 30S subunit, it contacts several helices of the 16S rRNA. In the 70S ribosome it contacts the 23S rRNA (bridge B1a) and protein L5 of the 50S subunit (bridge B1b), connecting the 2 subunits; these bridges are implicated in subunit movement. Contacts the tRNAs in the A and P-sites. In Dehalococcoides mccartyi (strain ATCC BAA-2100 / JCM 16839 / KCTC 5957 / BAV1), this protein is Small ribosomal subunit protein uS13.